Consider the following 581-residue polypeptide: A-type ATP synthase subunit A (581 aa).

232–239 (GPFGSGKT) is a binding site for ATP.

This sequence belongs to the ATPase alpha/beta chains family. Has multiple subunits with at least A(3), B(3), C, D, E, F, H, I and proteolipid K(x).

It localises to the cell membrane. The catalysed reaction is ATP + H2O + 4 H(+)(in) = ADP + phosphate + 5 H(+)(out). In terms of biological role, component of the A-type ATP synthase that produces ATP from ADP in the presence of a proton gradient across the membrane. The A chain is the catalytic subunit. The protein is A-type ATP synthase subunit A of Methanocorpusculum labreanum (strain ATCC 43576 / DSM 4855 / Z).